Consider the following 44-residue polypeptide: Photosystem I reaction center subunit IX (44 aa).

Residues 7–27 form a helical membrane-spanning segment; it reads YLSAAPVLSTIWFGALAGLLI.

It belongs to the PsaJ family.

It is found in the plastid. The protein localises to the chloroplast thylakoid membrane. Its function is as follows. May help in the organization of the PsaE and PsaF subunits. The chain is Photosystem I reaction center subunit IX from Pelargonium hortorum (Common geranium).